The sequence spans 305 residues: Oxygen-dependent coproporphyrinogen-III oxidase (305 aa).

Serine 93 lines the substrate pocket. Residues histidine 97 and histidine 107 each coordinate a divalent metal cation. The active-site Proton donor is the histidine 107. 109 to 111 (NVR) lines the substrate pocket. A divalent metal cation-binding residues include histidine 146 and histidine 176. An important for dimerization region spans residues 241–276 (YVEFNLVYDRGTLFGLQSGGRTESILMSLPPQVRWG). 259-261 (GGR) lines the substrate pocket.

This sequence belongs to the aerobic coproporphyrinogen-III oxidase family. Homodimer. A divalent metal cation serves as cofactor.

Its subcellular location is the cytoplasm. The catalysed reaction is coproporphyrinogen III + O2 + 2 H(+) = protoporphyrinogen IX + 2 CO2 + 2 H2O. The protein operates within porphyrin-containing compound metabolism; protoporphyrin-IX biosynthesis; protoporphyrinogen-IX from coproporphyrinogen-III (O2 route): step 1/1. Functionally, involved in the heme biosynthesis. Catalyzes the aerobic oxidative decarboxylation of propionate groups of rings A and B of coproporphyrinogen-III to yield the vinyl groups in protoporphyrinogen-IX. The sequence is that of Oxygen-dependent coproporphyrinogen-III oxidase from Pseudomonas fluorescens (strain ATCC BAA-477 / NRRL B-23932 / Pf-5).